The following is a 1538-amino-acid chain: Lysophospholipase nte1 (1538 aa).

Over 1–74 (MATDGGPLAA…PPPTPSTMAG (74 aa)) the chain is Cytoplasmic. Residues 75 to 95 (WFGWVFSFFFQVIPSVLYWVI) traverse the membrane as a helical segment. Residues 96–117 (TFATITLPTWLFTLFSMSLTFT) are Lumenal-facing. The helical transmembrane segment at 118–138 (MNFTTLLLIALAIVSTISWFI) threads the bilayer. Residues 139–1538 (RYRFLNMYSR…RTLAPRRASI (1400 aa)) lie on the Cytoplasmic side of the membrane. 3 disordered regions span residues 242–264 (KPNVDEGSNHMGAESSDEDDHRV), 302–393 (EGSS…KSVH), and 529–559 (AAQSKRPVSMASPEDISGDRESAGPSPGDLL). Low complexity predominate over residues 302–314 (EGSSSSASSVGPS). The span at 329-345 (GLEDSPRSNFVRDHGDS) shows a compositional bias: basic and acidic residues. A nucleoside 3',5'-cyclic phosphate is bound by residues 692 to 811 (GGTS…QGYV) and 856 to 976 (RLTS…IAQR). Residues 1235 to 1399 (LVLGGGGARG…IDNLTVTHMK (165 aa)) form the PNPLA domain. Positions 1239–1244 (GGGARG) match the GXGXXG motif. The GXSXG motif lies at 1266–1270 (GTSIG). The Nucleophile role is filled by S1268. D1386 acts as the Proton acceptor in catalysis. The DGA/G signature appears at 1386 to 1388 (DGG). Residues 1517 to 1538 (LPEETEEKKKLQRTLAPRRASI) are disordered.

This sequence belongs to the NTE family.

The protein localises to the endoplasmic reticulum membrane. It carries out the reaction a 1-acyl-sn-glycero-3-phosphocholine + H2O = sn-glycerol 3-phosphocholine + a fatty acid + H(+). Its activity is regulated as follows. Inhibited by organophosphorus esters. In terms of biological role, intracellular phospholipase B that catalyzes the double deacylation of phosphatidylcholine (PC) to glycerophosphocholine (GroPCho). Plays an important role in membrane lipid homeostasis. Responsible for the rapid PC turnover in response to inositol, elevated temperatures, or when choline is present in the growth medium. This chain is Lysophospholipase nte1 (nte1), found in Aspergillus oryzae (strain ATCC 42149 / RIB 40) (Yellow koji mold).